Consider the following 343-residue polypeptide: UDP-3-O-acylglucosamine N-acyltransferase (343 aa).

Residue His-238 is the Proton acceptor of the active site.

Belongs to the transferase hexapeptide repeat family. LpxD subfamily. In terms of assembly, homotrimer.

The catalysed reaction is a UDP-3-O-[(3R)-3-hydroxyacyl]-alpha-D-glucosamine + a (3R)-hydroxyacyl-[ACP] = a UDP-2-N,3-O-bis[(3R)-3-hydroxyacyl]-alpha-D-glucosamine + holo-[ACP] + H(+). The protein operates within bacterial outer membrane biogenesis; LPS lipid A biosynthesis. Catalyzes the N-acylation of UDP-3-O-acylglucosamine using 3-hydroxyacyl-ACP as the acyl donor. Is involved in the biosynthesis of lipid A, a phosphorylated glycolipid that anchors the lipopolysaccharide to the outer membrane of the cell. The chain is UDP-3-O-acylglucosamine N-acyltransferase from Marinomonas sp. (strain MWYL1).